A 156-amino-acid polypeptide reads, in one-letter code: MKVIEGGFPAPNAKIAIVISRFNSFINESLLSGAIDTLKRHGQVSEDNITVVRCPGAVELPLVAQRVAKTGKYDAIVSLGTVIRGGTPHFDYVCSECNKGLAQVSLEYSLPVAFGVLTVDTIDQAIERAGTKAGNKGAEAALSALEMINVLSEIDS.

5-amino-6-(D-ribitylamino)uracil contacts are provided by residues phenylalanine 22, alanine 57 to glutamate 59, and threonine 81 to isoleucine 83. Glycine 86 to threonine 87 contacts (2S)-2-hydroxy-3-oxobutyl phosphate. Histidine 89 serves as the catalytic Proton donor. Phenylalanine 114 is a binding site for 5-amino-6-(D-ribitylamino)uracil. Arginine 128 contacts (2S)-2-hydroxy-3-oxobutyl phosphate.

The protein belongs to the DMRL synthase family. As to quaternary structure, forms an icosahedral capsid composed of 60 subunits, arranged as a dodecamer of pentamers.

The enzyme catalyses (2S)-2-hydroxy-3-oxobutyl phosphate + 5-amino-6-(D-ribitylamino)uracil = 6,7-dimethyl-8-(1-D-ribityl)lumazine + phosphate + 2 H2O + H(+). The protein operates within cofactor biosynthesis; riboflavin biosynthesis; riboflavin from 2-hydroxy-3-oxobutyl phosphate and 5-amino-6-(D-ribitylamino)uracil: step 1/2. Functionally, catalyzes the formation of 6,7-dimethyl-8-ribityllumazine by condensation of 5-amino-6-(D-ribitylamino)uracil with 3,4-dihydroxy-2-butanone 4-phosphate. This is the penultimate step in the biosynthesis of riboflavin. This Vibrio campbellii (strain ATCC BAA-1116) protein is 6,7-dimethyl-8-ribityllumazine synthase.